Consider the following 141-residue polypeptide: HTH-type transcriptional regulator LrpA (141 aa).

The HTH asnC-type domain occupies 2–63; that stretch reads IDERDKIILE…RINPKKLGYS (62 aa). Residues 21–40 constitute a DNA-binding region (H-T-H motif); that stretch reads FTEIAKKLGISETAVRKRVK.

In terms of assembly, homooctamer; tetramer of dimers.

Its function is as follows. DNA-binding protein that negatively regulates its own transcription. Interferes with RNA polymerase (RNAP) recruitment by inhibiting the association of RNAP with the TBP-TFB promoter complex. The chain is HTH-type transcriptional regulator LrpA (lrpA) from Pyrococcus horikoshii (strain ATCC 700860 / DSM 12428 / JCM 9974 / NBRC 100139 / OT-3).